Reading from the N-terminus, the 123-residue chain is Transmembrane protein 049L (123 aa).

2 consecutive transmembrane segments (helical) span residues 67-87 (VFGA…LWLV) and 104-121 (LSLQ…GVYN).

Its subcellular location is the membrane. The polypeptide is Transmembrane protein 049L (Acheta domesticus (House cricket)).